Consider the following 215-residue polypeptide: Adenylate kinase (215 aa).

10 to 15 (GAGKGT) is a binding site for ATP. Residues 30 to 59 (STGDMLRAAVKAETELGLKAKSVMDSGGLV) form an NMP region. AMP is bound by residues threonine 31, arginine 36, 57 to 59 (GLV), 85 to 88 (GFPR), and glutamine 92. The segment at 122 to 159 (GRRVHEGSGRIYHTIFNPPKVEGIDDVTGEPLLQRKDD) is LID. ATP contacts are provided by residues arginine 123 and 132 to 133 (IY). The AMP site is built by arginine 156 and arginine 167. ATP is bound at residue glycine 201.

This sequence belongs to the adenylate kinase family. Monomer.

It is found in the cytoplasm. It carries out the reaction AMP + ATP = 2 ADP. It participates in purine metabolism; AMP biosynthesis via salvage pathway; AMP from ADP: step 1/1. In terms of biological role, catalyzes the reversible transfer of the terminal phosphate group between ATP and AMP. Plays an important role in cellular energy homeostasis and in adenine nucleotide metabolism. The protein is Adenylate kinase of Pseudomonas syringae pv. syringae (strain B728a).